Here is a 426-residue protein sequence, read N- to C-terminus: Histidine--tRNA ligase (426 aa).

It belongs to the class-II aminoacyl-tRNA synthetase family. In terms of assembly, homodimer.

The protein resides in the cytoplasm. It catalyses the reaction tRNA(His) + L-histidine + ATP = L-histidyl-tRNA(His) + AMP + diphosphate + H(+). This is Histidine--tRNA ligase from Streptococcus gordonii (strain Challis / ATCC 35105 / BCRC 15272 / CH1 / DL1 / V288).